The primary structure comprises 383 residues: Probable lipid transporter atnI (383 aa).

2 consecutive transmembrane segments (helical) span residues 46–66 (VLFS…AIMF) and 71–91 (AWVV…RSLF). An N-linked (GlcNAc...) asparagine glycan is attached at Asn94. 5 helical membrane-spanning segments follow: residues 104–124 (FTIF…MTLG), 144–164 (FGHI…VGAA), 182–202 (IYMG…GLFI), 231–251 (WLFY…IFRL), and 269–289 (WFEY…LNVA). A disordered region spans residues 305 to 383 (VSRKEKKQRK…YDNRGNEVRP (79 aa)). Basic residues predominate over residues 307–316 (RKEKKQRKRE). Over residues 317–329 (KKEAKIAEKEAKK) the composition is skewed to basic and acidic residues.

It belongs to the lipid-translocating exporter (LTE) (TC 9.A.26.1) family.

Its subcellular location is the membrane. Its pathway is secondary metabolite biosynthesis. Probable lipid transporter; part of the gene cluster that mediates the biosynthesis of aspercryptins, linear lipopeptides built from six amino acids including 2 highly unusual and nonproteogenic amino acids, 2-amino-octanoic acid (2aoa) and 2-amino-dodecanol (2adol). The core structure of aspercryptins is as follows: Ser/Ala-Thr-Ile/Val-2aoa-Asn-2adol. The first step of aspercryptin biosynthesis is the generation of the fatty acid precursors, octanoic and dodecanoic acids, by the FAS subunits atnF and atnM. The fatty acid precursors are likely transformed into the corresponding alpha-amino fatty acids in three steps. First, they are hydroxylated by the cytochrome P450 monooxygenase atnE, then oxidized to the corresponding alpha-keto acids by the NAD(P)-dependent oxidoreductase atnD, and finally converted to the alpha-amino fatty acids by the PLP-dependent aminotransferases atnH or atnJ. the alpha-amino fatty acids, 2-amino-octanoic and 2-amino-dodecanoic acids, are recognized, activated, and covalently tethered to the NRPS atnA by its fourth and sixth adenylation domains. The second module of atnA is the Thr module and contains an epimerase (E) domain responsible for the epimerization of Thr to D-allo-Thr. Additionally, despite atnA having only one epimerase domain, the first amino acid of aspercryptin A1 is D-Ser, suggesting that serine is either loaded directly as D-Ser on the first module or that the epimerase domain in the threonine module epimerizes both L-Ser and L-Thr. After condensation of the hexapeptide of aspercryptin, the C-terminal reductase (TE) domain might be involved in the reductive release and production of the aldehyde hexapeptide. Further reduction would generate aspercryptins. The variety of aspercryptins produced reflects the flexibility of the atnA NRPS, allowing incorporation of alanine instead of serine, valine for isoleucine, and a C10 fatty amino alcohol instead of the C12 version. AtnB seems to be involved in the selectivity for Ile versus Val by the third module. Moreover, type B, C and D aspercryptins have an additional N-terminal cichorine, acetyl and propionyl group respectively. This chain is Probable lipid transporter atnI, found in Emericella nidulans (strain FGSC A4 / ATCC 38163 / CBS 112.46 / NRRL 194 / M139) (Aspergillus nidulans).